The sequence spans 319 residues: Lambda-crystallin homolog (319 aa).

Residue Ala-2 is modified to N-acetylalanine. A Phosphoserine modification is found at Ser-3. NAD(+)-binding positions include 16 to 17 (LI), Asp-36, Glu-97, and Lys-102.

This sequence belongs to the 3-hydroxyacyl-CoA dehydrogenase family. In terms of assembly, homodimer. As to expression, widely expressed, with highest levels in liver. Undetectable in skeletal muscle.

It is found in the cytoplasm. The enzyme catalyses L-gulonate + NAD(+) = 3-dehydro-L-gulonate + NADH + H(+). With respect to regulation, inhibited by malonate. Its function is as follows. Has high L-gulonate 3-dehydrogenase activity. It also exhibits low dehydrogenase activity toward L-3-hydroxybutyrate (HBA) and L-threonate. This is Lambda-crystallin homolog (Cryl1) from Mus musculus (Mouse).